The chain runs to 366 residues: Galactoside alpha-(1,2)-fucosyltransferase 1 (366 aa).

At 1–8 (MWPPSHRQ) the chain is on the cytoplasmic side. A helical; Signal-anchor for type II membrane protein membrane pass occupies residues 9-25 (LCRAFLLVCVFSVISFF). At 26–366 (LHIHQDSFPH…LSPLWTLAKP (341 aa)) the chain is on the lumenal side. N66, N302, and N328 each carry an N-linked (GlcNAc...) asparagine glycan.

This sequence belongs to the glycosyltransferase 11 family.

Its subcellular location is the golgi apparatus. The protein localises to the golgi stack membrane. The catalysed reaction is a beta-D-galactosyl-(1-&gt;4)-N-acetyl-beta-D-glucosaminyl derivative + GDP-beta-L-fucose = an alpha-L-Fuc-(1-&gt;2)-beta-D-Gal-(1-&gt;4)-beta-D-GlcNAc derivative + GDP + H(+). It catalyses the reaction a ganglioside GA1 + GDP-beta-L-fucose = a ganglioside Fuc-GA1 + GDP + H(+). It carries out the reaction a beta-D-Gal-(1-&gt;3)-beta-D-GlcNAc-(1-&gt;3)-beta-D-Gal-(1-&gt;4)-beta-D-Glc-(1&lt;-&gt;1')-Cer(d18:1(4E)) + GDP-beta-L-fucose = alpha-L-fucosyl-(1-&gt;2)- beta-D-galactosyl-(1-&gt;3)-N-acetyl-beta-D-glucosaminyl-(1-&gt;3)-beta-D-galactosyl-(1-&gt;4)-beta-D-glucosyl-(1&lt;-&gt;1')-N-acylsphing-4-enine + GDP + H(+). The enzyme catalyses a neolactoside nLc4Cer(d18:1(4E)) + GDP-beta-L-fucose = a neolactoside IV(2)-alpha-Fuc-nLc4Cer(d18:1(4E)) + GDP + H(+). The catalysed reaction is a ganglioside GM1 + GDP-beta-L-fucose = a ganglioside Fuc-GM1 + GDP + H(+). It catalyses the reaction beta-D-galactosyl-(1-&gt;3)-N-acetyl-D-galactosamine + GDP-beta-L-fucose = alpha-L-fucosyl-(1-&gt;2)-beta-D-galactosyl-(1-&gt;3)-N-acetyl-D-galactosamine + GDP + H(+). The protein operates within protein modification; protein glycosylation. Its function is as follows. Catalyzes the transfer of L-fucose, from a guanosine diphosphate-beta-L-fucose, to the terminal galactose residue of glycoconjugates through an alpha(1,2) linkage leading to H antigen synthesis that is an intermediate substrate in the synthesis of ABO blood group antigens. H antigen is essential for maturation of the glomerular layer of the main olfactory bulb, in cell migration and early cell-cell contacts during tumor associated angiogenesis. Preferentially fucosylates soluble lactose and to a lesser extent fucosylates glycolipids gangliosides GA1 and GM1a. In Gorilla gorilla gorilla (Western lowland gorilla), this protein is Galactoside alpha-(1,2)-fucosyltransferase 1.